Consider the following 461-residue polypeptide: UPF0210 protein LCABL_10110 (461 aa).

Belongs to the UPF0210 family. Homodimer.

In Lacticaseibacillus casei (strain BL23) (Lactobacillus casei), this protein is UPF0210 protein LCABL_10110.